We begin with the raw amino-acid sequence, 602 residues long: Elongation factor 4 (602 aa).

Residues 7 to 188 (ENIRNFSIIA…AIIDLVPPPK (182 aa)) form the tr-type G domain. GTP contacts are provided by residues 19–24 (DHGKST) and 135–138 (NKID).

The protein belongs to the TRAFAC class translation factor GTPase superfamily. Classic translation factor GTPase family. LepA subfamily.

It is found in the cell inner membrane. The catalysed reaction is GTP + H2O = GDP + phosphate + H(+). In terms of biological role, required for accurate and efficient protein synthesis under certain stress conditions. May act as a fidelity factor of the translation reaction, by catalyzing a one-codon backward translocation of tRNAs on improperly translocated ribosomes. Back-translocation proceeds from a post-translocation (POST) complex to a pre-translocation (PRE) complex, thus giving elongation factor G a second chance to translocate the tRNAs correctly. Binds to ribosomes in a GTP-dependent manner. The polypeptide is Elongation factor 4 (Chlamydia pneumoniae (Chlamydophila pneumoniae)).